The primary structure comprises 336 residues: tRNA N6-adenosine threonylcarbamoyltransferase (336 aa).

2 residues coordinate Fe cation: His-114 and His-118. Residues 136-140, Asp-169, Gly-182, Asp-186, and Asn-275 contribute to the substrate site; that span reads LVSGG. Asp-301 serves as a coordination point for Fe cation.

The protein belongs to the KAE1 / TsaD family. Fe(2+) serves as cofactor.

The protein localises to the cytoplasm. The enzyme catalyses L-threonylcarbamoyladenylate + adenosine(37) in tRNA = N(6)-L-threonylcarbamoyladenosine(37) in tRNA + AMP + H(+). Required for the formation of a threonylcarbamoyl group on adenosine at position 37 (t(6)A37) in tRNAs that read codons beginning with adenine. Is involved in the transfer of the threonylcarbamoyl moiety of threonylcarbamoyl-AMP (TC-AMP) to the N6 group of A37, together with TsaE and TsaB. TsaD likely plays a direct catalytic role in this reaction. The chain is tRNA N6-adenosine threonylcarbamoyltransferase from Streptococcus gordonii (strain Challis / ATCC 35105 / BCRC 15272 / CH1 / DL1 / V288).